The following is an 84-amino-acid chain: Small ribosomal subunit protein uS17 (84 aa).

Belongs to the universal ribosomal protein uS17 family. Part of the 30S ribosomal subunit.

Its function is as follows. One of the primary rRNA binding proteins, it binds specifically to the 5'-end of 16S ribosomal RNA. The chain is Small ribosomal subunit protein uS17 from Histophilus somni (strain 129Pt) (Haemophilus somnus).